Here is a 654-residue protein sequence, read N- to C-terminus: Fructose-1,6-bisphosphatase class 3 (654 aa).

The interval 288–307 (NPAFKPKKRPDKHERLTQRE) is disordered. A compositionally biased stretch (basic and acidic residues) spans 298–307 (DKHERLTQRE).

It belongs to the FBPase class 3 family. Mn(2+) is required as a cofactor.

It carries out the reaction beta-D-fructose 1,6-bisphosphate + H2O = beta-D-fructose 6-phosphate + phosphate. It participates in carbohydrate biosynthesis; gluconeogenesis. This chain is Fructose-1,6-bisphosphatase class 3, found in Staphylococcus aureus (strain USA300).